Consider the following 280-residue polypeptide: Phosphatidylglycerol--prolipoprotein diacylglyceryl transferase (280 aa).

The next 3 helical transmembrane spans lie at 19–39 (LSVRWYGIIIAVGILLGYFVA), 56–76 (IIFYSALFGFIAARIYFVIFQ), and 90–110 (IWHGGIAIHGGLIGGFIAGVI). R138 lines the a 1,2-diacyl-sn-glycero-3-phospho-(1'-sn-glycerol) pocket. 2 consecutive transmembrane segments (helical) span residues 204-224 (LGETFFLYLTWYSIGRFFIEG) and 236-256 (IRVAQLVSILLILISISLIVY).

The protein belongs to the Lgt family.

It localises to the cell membrane. The enzyme catalyses L-cysteinyl-[prolipoprotein] + a 1,2-diacyl-sn-glycero-3-phospho-(1'-sn-glycerol) = an S-1,2-diacyl-sn-glyceryl-L-cysteinyl-[prolipoprotein] + sn-glycerol 1-phosphate + H(+). It functions in the pathway protein modification; lipoprotein biosynthesis (diacylglyceryl transfer). Catalyzes the transfer of the diacylglyceryl group from phosphatidylglycerol to the sulfhydryl group of the N-terminal cysteine of a prolipoprotein, the first step in the formation of mature lipoproteins. This is Phosphatidylglycerol--prolipoprotein diacylglyceryl transferase from Staphylococcus aureus (strain MRSA252).